The following is a 296-amino-acid chain: Transmembrane O-methyltransferase (296 aa).

The chain crosses the membrane as a helical span at residues Val-36–Val-56. S-adenosyl-L-methionine contacts are provided by residues Glu-142, Gly-144–Thr-145, Ser-150, Glu-168, and Ser-198.

It belongs to the class I-like SAM-binding methyltransferase superfamily. Cation-dependent O-methyltransferase family. As to quaternary structure, interacts with LHFPL5, PCDH15, TMC1, TMC2 and TMIE. Interacts directly with TMC1. The interaction of TOMT with TMC1 and TMC2 is required for the transportation of TMC1/2 into the stereocilia of hair cells.

It is found in the membrane. The protein resides in the cytoplasm. The protein localises to the endoplasmic reticulum. It catalyses the reaction a catechol + S-adenosyl-L-methionine = a guaiacol + S-adenosyl-L-homocysteine + H(+). Its function is as follows. Catalyzes the O-methylation, and thereby the inactivation, of catecholamine neurotransmitters and catechol hormones. Required for auditory function. Component of the cochlear hair cell's mechanotransduction (MET) machinery. Involved in the assembly of the asymmetric tip-link MET complex. Required for transportation of TMC1 and TMC2 proteins into the mechanically sensitive stereocilia of the hair cells. The function in MET is independent of the enzymatic activity. The sequence is that of Transmembrane O-methyltransferase from Macaca mulatta (Rhesus macaque).